The sequence spans 156 residues: MAGFIGKERHSIDEKGRLMIPARFRRKFADAGSCDGGASEYGRFGALYVMKTSDGSLELYEPSVWEGMGKSISALSDFNPEERLLKTLMYECLEMVELDRQGRIPLSREFLEHAGISGEVVILGADTKMIVWEPARLRGVVDGSSGRFAALAGRYF.

SpoVT-AbrB domains follow at residues 7–64 and 93–136; these read KERH…EPSV and LEMV…EPAR.

It belongs to the MraZ family. In terms of assembly, forms oligomers.

It is found in the cytoplasm. It localises to the nucleoid. This is Transcriptional regulator MraZ from Chlorobium phaeovibrioides (strain DSM 265 / 1930) (Prosthecochloris vibrioformis (strain DSM 265)).